The sequence spans 80 residues: MGQIGIWQILIIALVILVLFGRGKISDMMGDFGKGVSSFKKGLNEEDKPAEPAAKIEGPSHEAKPAGEAAKDPRPADKQG.

A helical transmembrane segment spans residues 1–21 (MGQIGIWQILIIALVILVLFG). Residues 38-80 (SFKKGLNEEDKPAEPAAKIEGPSHEAKPAGEAAKDPRPADKQG) are disordered. Basic and acidic residues predominate over residues 58–80 (GPSHEAKPAGEAAKDPRPADKQG).

This sequence belongs to the TatA/E family. In terms of assembly, the Tat system comprises two distinct complexes: a TatABC complex, containing multiple copies of TatA, TatB and TatC subunits, and a separate TatA complex, containing only TatA subunits. Substrates initially bind to the TatABC complex, which probably triggers association of the separate TatA complex to form the active translocon.

It localises to the cell inner membrane. Functionally, part of the twin-arginine translocation (Tat) system that transports large folded proteins containing a characteristic twin-arginine motif in their signal peptide across membranes. TatA could form the protein-conducting channel of the Tat system. This Erythrobacter litoralis (strain HTCC2594) protein is Sec-independent protein translocase protein TatA.